The chain runs to 610 residues: Autophagy-related protein 22-1 (610 aa).

The segment covering 1 to 11 (MAFTPSSPPSP) has biased composition (pro residues). Positions 1-29 (MAFTPSSPPSPAADASQRPSRYPGEDTTP) are disordered. Residues 35 to 55 (ILGWYAYGIAAEVFAVCGVGS) form a helical membrane-spanning segment. A glycan (N-linked (GlcNAc...) asparagine) is linked at Asn90. 3 helical membrane-spanning segments follow: residues 120 to 140 (SFAM…LISF), 152 to 171 (TLLL…FVFV), and 189 to 209 (CLGS…ANDP). The interval 229–265 (GQFEPRDSFSERNPEFESQYTPGIGLGSKPSTNATSP) is disordered. Over residues 232-243 (EPRDSFSERNPE) the composition is skewed to basic and acidic residues. Asn261 carries N-linked (GlcNAc...) asparagine glycosylation. The next 8 membrane-spanning stretches (helical) occupy residues 278 to 298 (VGLG…LLFA), 310 to 330 (TLPL…FTMV), 384 to 404 (VFLV…GTAI), 418 to 438 (VGCL…LWPV), 453 to 473 (LCIA…IPLF), 488 to 510 (FPLA…SFFG), 522 to 544 (YALY…GMLI), and 553 to 573 (GFFF…MVNA). The interval 588–610 (AKGQESETGEPGEEAEGLLARGA) is disordered. Positions 594 to 603 (ETGEPGEEAE) are enriched in acidic residues.

The protein belongs to the ATG22 family.

The protein localises to the vacuole membrane. In terms of biological role, vacuolar effluxer which mediate the efflux of amino acids resulting from autophagic degradation. The release of autophagic amino acids allows the maintenance of protein synthesis and viability during nitrogen starvation. In Aspergillus terreus (strain NIH 2624 / FGSC A1156), this protein is Autophagy-related protein 22-1 (atg22-1).